The sequence spans 251 residues: Glucosamine-6-phosphate deaminase (251 aa).

Catalysis depends on Asp73, which acts as the Proton acceptor; for enolization step. The active-site For ring-opening step is the Asn142. Residue His144 is the Proton acceptor; for ring-opening step of the active site. The For ring-opening step role is filled by Glu149.

It belongs to the glucosamine/galactosamine-6-phosphate isomerase family. NagB subfamily.

It catalyses the reaction alpha-D-glucosamine 6-phosphate + H2O = beta-D-fructose 6-phosphate + NH4(+). Its pathway is amino-sugar metabolism; N-acetylneuraminate degradation; D-fructose 6-phosphate from N-acetylneuraminate: step 5/5. Its function is as follows. Catalyzes the reversible isomerization-deamination of glucosamine 6-phosphate (GlcN6P) to form fructose 6-phosphate (Fru6P) and ammonium ion. This Rhodopirellula baltica (strain DSM 10527 / NCIMB 13988 / SH1) protein is Glucosamine-6-phosphate deaminase.